An 842-amino-acid polypeptide reads, in one-letter code: Valine--tRNA ligase (842 aa).

Positions 86 to 96 match the 'HIGH' region motif; sequence PFTSGELHMGH. Residues 572–576 carry the 'KMSKS' region motif; it reads RMSKS. Lysine 575 is an ATP binding site.

Belongs to the class-I aminoacyl-tRNA synthetase family. ValS type 2 subfamily.

It localises to the cytoplasm. The catalysed reaction is tRNA(Val) + L-valine + ATP = L-valyl-tRNA(Val) + AMP + diphosphate. Its function is as follows. Catalyzes the attachment of valine to tRNA(Val). As ValRS can inadvertently accommodate and process structurally similar amino acids such as threonine, to avoid such errors, it has a 'posttransfer' editing activity that hydrolyzes mischarged Thr-tRNA(Val) in a tRNA-dependent manner. The protein is Valine--tRNA ligase of Saccharolobus solfataricus (strain ATCC 35092 / DSM 1617 / JCM 11322 / P2) (Sulfolobus solfataricus).